We begin with the raw amino-acid sequence, 219 residues long: Small ribosomal subunit protein uS3 (219 aa).

The 69-residue stretch at 38–106 (IRTYLKKKLY…KLNLEIKEIK (69 aa)) folds into the KH type-2 domain.

The protein belongs to the universal ribosomal protein uS3 family. Part of the 30S ribosomal subunit. Forms a tight complex with proteins S10 and S14.

Functionally, binds the lower part of the 30S subunit head. Binds mRNA in the 70S ribosome, positioning it for translation. The sequence is that of Small ribosomal subunit protein uS3 from Lachnoclostridium phytofermentans (strain ATCC 700394 / DSM 18823 / ISDg) (Clostridium phytofermentans).